A 200-amino-acid chain; its full sequence is Proteasome subunit beta 2 (200 aa).

Positions 1 to 7 are cleaved as a propeptide — removed in mature form; by autocatalysis; that stretch reads MEEKKTG. Thr-8 acts as the Nucleophile in catalysis.

Belongs to the peptidase T1B family. The 20S proteasome core is composed of 14 alpha and 14 beta subunits that assemble into four stacked heptameric rings, resulting in a barrel-shaped structure. The two inner rings, each composed of seven catalytic beta subunits, are sandwiched by two outer rings, each composed of seven alpha subunits. The catalytic chamber with the active sites is on the inside of the barrel. Has a gated structure, the ends of the cylinder being occluded by the N-termini of the alpha-subunits. Is capped at one or both ends by the proteasome regulatory ATPase, PAN.

Its subcellular location is the cytoplasm. It carries out the reaction Cleavage of peptide bonds with very broad specificity.. The formation of the proteasomal ATPase PAN-20S proteasome complex, via the docking of the C-termini of PAN into the intersubunit pockets in the alpha-rings, triggers opening of the gate for substrate entry. Interconversion between the open-gate and close-gate conformations leads to a dynamic regulation of the 20S proteasome proteolysis activity. Its function is as follows. Component of the proteasome core, a large protease complex with broad specificity involved in protein degradation. In Thermococcus gammatolerans (strain DSM 15229 / JCM 11827 / EJ3), this protein is Proteasome subunit beta 2.